A 428-amino-acid chain; its full sequence is 5'-nucleotidase domain-containing protein 4 (428 aa).

Catalysis depends on aspartate 22, which acts as the Nucleophile. Residues aspartate 22, aspartate 24, and aspartate 317 each coordinate Mg(2+). Aspartate 24 serves as the catalytic Proton donor.

This sequence belongs to the 5'(3')-deoxyribonucleotidase family.

The chain is 5'-nucleotidase domain-containing protein 4 (NT5DC4) from Homo sapiens (Human).